Consider the following 155-residue polypeptide: UPF0303 protein lp_3613 (155 aa).

The protein belongs to the UPF0303 family.

This Lactiplantibacillus plantarum (strain ATCC BAA-793 / NCIMB 8826 / WCFS1) (Lactobacillus plantarum) protein is UPF0303 protein lp_3613.